The chain runs to 255 residues: Acetylglutamate kinase (255 aa).

Substrate is bound by residues 40–41 (GG), R62, and N153.

The protein belongs to the acetylglutamate kinase family. ArgB subfamily.

Its subcellular location is the cytoplasm. It catalyses the reaction N-acetyl-L-glutamate + ATP = N-acetyl-L-glutamyl 5-phosphate + ADP. The protein operates within amino-acid biosynthesis; L-arginine biosynthesis; N(2)-acetyl-L-ornithine from L-glutamate: step 2/4. Functionally, catalyzes the ATP-dependent phosphorylation of N-acetyl-L-glutamate. The protein is Acetylglutamate kinase of Bacillus cereus (strain B4264).